Reading from the N-terminus, the 96-residue chain is YcgL domain-containing protein VS_0884 (96 aa).

A YcgL domain is found at 1–84 (MLCSIYKSSK…PPVNELELHK (84 aa)).

The polypeptide is YcgL domain-containing protein VS_0884 (Vibrio atlanticus (strain LGP32) (Vibrio splendidus (strain Mel32))).